The following is a 552-amino-acid chain: Hyaluronan synthase 2 (552 aa).

Residues 1-11 (MHCERFLCVLR) lie on the Cytoplasmic side of the membrane. A helical membrane pass occupies residues 12–32 (IIGTTLFGVSLLLGITAAYIV). Residues 33–45 (GYQFIQTDNYYFS) are Extracellular-facing. Residues 46-66 (FGLYGAFLASHLIIQSLFAFL) form a helical membrane-spanning segment. Residues 67 to 374 (EHRKMKKSLE…NAMWFHKHHL (308 aa)) lie on the Cytoplasmic side of the membrane. Threonine 110 carries the phosphothreonine modification. A Glycyl lysine isopeptide (Lys-Gly) (interchain with G-Cter in ubiquitin) cross-link involves residue lysine 190. Serine 221 carries an O-linked (GlcNAc) serine glycan. A Phosphothreonine modification is found at threonine 328. The helical transmembrane segment at 375 to 395 (WMTYEAVITGFFPFFLIATVI) threads the bilayer. Topologically, residues 396 to 402 (QLFYRGK) are extracellular. Residues 403–423 (IWNILLFLLTVQLVGLIKSSF) form a helical membrane-spanning segment. The Cytoplasmic segment spans residues 424–429 (ASCLRG). The chain crosses the membrane as a helical span at residues 430–450 (NIVMVFMSLYSVLYMSSLLPA). Residues 451–475 (KMFAIATINKAGWGTSGRKTIVVNF) are Extracellular-facing. Residues 476-496 (IGLIPVSVWFTILLGGVIFTI) traverse the membrane as a helical segment. The Cytoplasmic segment spans residues 497 to 510 (YKESKKPFSESKQT). The chain crosses the membrane as a helical span at residues 511-531 (VLIVGTLIYACYWVMLLTLYV). At 532–552 (VLINKCGRRKKGQQYDMVLDV) the chain is on the extracellular side.

The protein belongs to the NodC/HAS family. As to quaternary structure, homodimer; dimerization promotes enzymatic activity. Forms heterodimer with HAS3. Forms heterodimer with HAS1. It depends on Mg(2+) as a cofactor. In terms of processing, phosphorylation at Thr-328 is essential for hyaluronan synthase activity. Post-translationally, O-GlcNAcylation at Ser-221 increases the stability of HAS2 and plasma membrane localization. Ubiquitination at Lys-190; this ubiquitination is essential for hyaluronan synthase activity and homo- or hetero-oligomerization. Can also be poly-ubiquitinated. Deubiquitinated by USP17L22/USP17 and USP4. USP17L22/USP17 efficiently removes 'Lys-63'- and 'Lys-48'-linked polyubiquitin chains, whereas USP4 preferentially removes monoubiquitination and, partially, both 'Lys-63'- and 'Lys-48'-linked polyubiquitin chain. As to expression, expressed in heart, brain, spleen, lung and skeletal muscle.

Its subcellular location is the cell membrane. It localises to the endoplasmic reticulum membrane. The protein localises to the vesicle. The protein resides in the golgi apparatus membrane. It is found in the lysosome. The catalysed reaction is [hyaluronan](n) + UDP-N-acetyl-alpha-D-glucosamine = N-acetyl-beta-D-glucosaminyl-(1-&gt;4)-[hyaluronan](n) + UDP + H(+). It catalyses the reaction N-acetyl-beta-D-glucosaminyl-(1-&gt;4)-[hyaluronan](n) + UDP-alpha-D-glucuronate = [hyaluronan](n+1) + UDP + H(+). The protein operates within glycan biosynthesis; hyaluronan biosynthesis. Functionally, catalyzes the addition of GlcNAc or GlcUA monosaccharides to the nascent hyaluronan polymer. Therefore, it is essential to hyaluronan synthesis a major component of most extracellular matrices that has a structural role in tissues architectures and regulates cell adhesion, migration and differentiation. This is one of the isozymes catalyzing that reaction and it is particularly responsible for the synthesis of high molecular mass hyaluronan. Required for the transition of endocardial cushion cells into mesenchymal cells, a process crucial for heart development. May also play a role in vasculogenesis. High molecular mass hyaluronan also play a role in early contact inhibition a process which stops cell growth when cells come into contact with each other or the extracellular matrix. In terms of biological role, catalyzes the addition of GlcNAc or GlcUA monosaccharides to the nascent hyaluronan polymer. Therefore, it is essential to hyaluronan synthesis a major component of most extracellular matrices that has a structural role in tissues architectures and regulates cell adhesion, migration and differentiation. This is one of three isoenzymes responsible for cellular hyaluronan synthesis and it is particularly responsible for the synthesis of high molecular mass hyaluronan. The sequence is that of Hyaluronan synthase 2 from Mus musculus (Mouse).